Consider the following 127-residue polypeptide: Cyclin-dependent protein kinase inhibitor SIM (127 aa).

A disordered region spans residues 21–71 (RANTNRDDDGGGCTTPTSSDHKIPPTTATTPPPPPQKPRPPSTPSSLGIRS). Positions 50 to 63 (TPPPPPQKPRPPST) are enriched in pro residues.

As to quaternary structure, interacts with CDKA-1. Interacts with CYCD2-1, CYCD3-2 and CYCD4-1. Interacts with CDKB1-1. Interacts with CPR5. In terms of tissue distribution, expressed in the shoot apical meristem, leaf primordia and the elongation zone of the root.

The protein localises to the nucleus. Cyclin-dependent protein kinase (CDK) inhibitor that functions as a repressor of mitosis in the endoreduplication cell cycle. Inhibits the kinase activity of CYCD3-1/CDKA-1, CYCD2-1/CDKA-1 and CYCB1-1/CDKB1-1 complexes in a dose dependent manner. Cooperates with SMR1 and SMR2 to promote endoreplication during leaf development. Required for normal trichome endoreplicating cell cycles. Positive regulator of effector-triggered immunity (ETI). This Arabidopsis thaliana (Mouse-ear cress) protein is Cyclin-dependent protein kinase inhibitor SIM.